An 801-amino-acid polypeptide reads, in one-letter code: Squamosa promoter-binding-like protein 7 (801 aa).

Disordered stretches follow at residues 1 to 23 (MSSLSQSPPPPEMDIQPPALVND) and 59 to 91 (SPPLPPLIPTQTPAESELDPSPEESGSGSDRVR). Residues 135–212 (VARCQVPDCE…ERHNNRRKRK (78 aa)) form an SBP-type; atypical zinc finger. Zn(2+) contacts are provided by Cys138, Cys143, Cys160, Cys163, Cys179, Cys182, His186, and Cys198. A Bipartite nuclear localization signal motif is present at residues 195–211 (KRSCRRKLERHNNRRKR). Over residues 203–213 (ERHNNRRKRKP) the composition is skewed to basic residues. Disordered stretches follow at residues 203–258 (ERHN…PSLI) and 286–313 (GSGEAQPDEGMNDTKFERSPSNGDNKSA). Residues 222-233 (EQQQVLSQNDNS) show a composition bias toward polar residues. Basic and acidic residues predominate over residues 249-258 (QRAEEEPSLI). Polar residues predominate over residues 304 to 313 (SPSNGDNKSA).

Homodimer. Interacts with KIN17. Interacts with HY5. Zn(2+) is required as a cofactor. As to expression, expressed in roots rosette leaves, cauline leaves, stems, flowers and siliques.

It is found in the nucleus speckle. Functionally, transcription factor that participates in reprogramming global gene expression during copper deficiency in order to improve the metal uptake and prioritize its distribution to copper proteins of major importance. Binds directly to 5'-GTAC-3' motifs in the microRNA (miRNA) promoter of the stress-responsive miRNAs miR398b and miR398c to activate their transcription. During copper deficiency, activates the copper transporters COPT1 and COPT2, and the copper chaperone CCH, directly or indirectly via miRNAs. Required for the expression of the miRNAs miR397, miR408 and miR857. Acts coordinately with HY5 to regulate miR408 and its target genes in response to changes in light and copper conditions. Activates miR857 and its target genes in response to low copper conditions. Involved in cadmium stress response by regulating miR397a, miR398b, miR398c and miR857. Required for iron homeostasis during copper deficiency. This is Squamosa promoter-binding-like protein 7 (SPL7) from Arabidopsis thaliana (Mouse-ear cress).